We begin with the raw amino-acid sequence, 464 residues long: Protein FAM90A18 (464 aa).

Disordered regions lie at residues 1-42 (MMAR…DPRL), 70-387 (PATL…ASHD), and 415-437 (HSPE…SEAP). 2 stretches are compositionally biased toward basic and acidic residues: residues 74–89 (GKKE…KPRV) and 97–114 (NKDK…DPQR). Residues 180–197 (LASLSPLRKASLSSSSSL) are compositionally biased toward low complexity.

Belongs to the FAM90 family.

The chain is Protein FAM90A18 from Homo sapiens (Human).